The primary structure comprises 831 residues: Leucine--tRNA ligase (831 aa).

The 'HIGH' region motif lies at 35–45 (PYPSGKIHVGH). Residues 600–604 (KMSKS) carry the 'KMSKS' region motif. Lysine 603 serves as a coordination point for ATP.

The protein belongs to the class-I aminoacyl-tRNA synthetase family.

It localises to the cytoplasm. It catalyses the reaction tRNA(Leu) + L-leucine + ATP = L-leucyl-tRNA(Leu) + AMP + diphosphate. The protein is Leucine--tRNA ligase of Rickettsia bellii (strain RML369-C).